The following is a 94-amino-acid chain: Large ribosomal subunit protein bL25 (94 aa).

The protein belongs to the bacterial ribosomal protein bL25 family. As to quaternary structure, part of the 50S ribosomal subunit; part of the 5S rRNA/L5/L18/L25 subcomplex. Contacts the 5S rRNA. Binds to the 5S rRNA independently of L5 and L18.

In terms of biological role, this is one of the proteins that binds to the 5S RNA in the ribosome where it forms part of the central protuberance. The protein is Large ribosomal subunit protein bL25 of Edwardsiella ictaluri (strain 93-146).